A 345-amino-acid chain; its full sequence is Histidinol-phosphate aminotransferase (345 aa).

Lys-206 is modified (N6-(pyridoxal phosphate)lysine).

The protein belongs to the class-II pyridoxal-phosphate-dependent aminotransferase family. Histidinol-phosphate aminotransferase subfamily. In terms of assembly, homodimer. Pyridoxal 5'-phosphate serves as cofactor.

The catalysed reaction is L-histidinol phosphate + 2-oxoglutarate = 3-(imidazol-4-yl)-2-oxopropyl phosphate + L-glutamate. It functions in the pathway amino-acid biosynthesis; L-histidine biosynthesis; L-histidine from 5-phospho-alpha-D-ribose 1-diphosphate: step 7/9. The polypeptide is Histidinol-phosphate aminotransferase (Bacteroides fragilis (strain YCH46)).